A 438-amino-acid polypeptide reads, in one-letter code: GTPase Der (438 aa).

EngA-type G domains are found at residues proline 4 to glycine 169 and isoleucine 178 to serine 353. GTP-binding positions include glycine 10–serine 17, aspartate 57–isoleucine 61, asparagine 120–aspartate 123, glycine 184–serine 191, aspartate 231–leucine 235, and asparagine 296–aspartate 299. The KH-like domain maps to arginine 354–threonine 438.

The protein belongs to the TRAFAC class TrmE-Era-EngA-EngB-Septin-like GTPase superfamily. EngA (Der) GTPase family. As to quaternary structure, associates with the 50S ribosomal subunit.

In terms of biological role, GTPase that plays an essential role in the late steps of ribosome biogenesis. The polypeptide is GTPase Der (Halothermothrix orenii (strain H 168 / OCM 544 / DSM 9562)).